The following is a 351-amino-acid chain: Pleckstrin (351 aa).

The 98-residue stretch at K4–K101 folds into the PH 1 domain. K64 bears the N6-acetyllysine mark. Phosphoserine is present on residues S113 and S117. The DEP domain maps to I136–D221. The PH 2 domain occupies V244–R348.

Major protein kinase C substrate of platelets. This is Pleckstrin (PLEK) from Canis lupus familiaris (Dog).